The sequence spans 421 residues: Medium-chain specific acyl-CoA dehydrogenase, mitochondrial (421 aa).

The transit peptide at 1 to 25 (MIALFRRSCGVLRSLSHFDWRSQHT) directs the protein to the mitochondrion. Lys69 carries the post-translational modification N6-acetyllysine; alternate. Lys69 bears the N6-succinyllysine; alternate mark. The residue at position 79 (Lys79) is an N6-acetyllysine. 158-167 (YCVTEPVAGS) contacts FAD. Position 167 (Ser167) interacts with octanoyl-CoA. Lys179 is subject to N6-succinyllysine. Position 191-193 (191-193 (WIT)) interacts with FAD. Lys212 bears the N6-acetyllysine; alternate mark. Lys212 carries the post-translational modification N6-succinyllysine; alternate. Ser216 provides a ligand contact to octanoyl-CoA. Lys217, Lys259, and Lys271 each carry N6-acetyllysine; alternate. An N6-succinyllysine; alternate mark is found at Lys217, Lys259, and Lys271. Octanoyl-CoA is bound at residue Asp278. Lys279 carries the post-translational modification N6-acetyllysine. Arg281 is a binding site for octanoyl-CoA. Lys301 carries the post-translational modification N6-acetyllysine. FAD-binding positions include 306-308 (RKT) and 316-317 (HQ). Residues Arg349 and Thr351 each contribute to the octanoyl-CoA site. Residue Thr351 is modified to Phosphothreonine. 374–378 (QIFGG) is a binding site for FAD. Glu401 serves as a coordination point for octanoyl-CoA. The active-site Proton acceptor is Glu401. 402–405 (GTAQ) serves as a coordination point for FAD.

The protein belongs to the acyl-CoA dehydrogenase family. In terms of assembly, homotetramer. Interacts with the heterodimeric electron transfer flavoprotein ETF. FAD is required as a cofactor. In terms of processing, acetylated. Could occur at proximity of the cofactor-binding sites and reduce the catalytic activity. Could be deacetylated by SIRT3.

It is found in the mitochondrion matrix. The enzyme catalyses a medium-chain 2,3-saturated fatty acyl-CoA + oxidized [electron-transfer flavoprotein] + H(+) = a medium-chain (2E)-enoyl-CoA + reduced [electron-transfer flavoprotein]. The catalysed reaction is pentanoyl-CoA + oxidized [electron-transfer flavoprotein] + H(+) = (2E)-pentenoyl-CoA + reduced [electron-transfer flavoprotein]. It catalyses the reaction hexanoyl-CoA + oxidized [electron-transfer flavoprotein] + H(+) = (2E)-hexenoyl-CoA + reduced [electron-transfer flavoprotein]. It carries out the reaction octanoyl-CoA + oxidized [electron-transfer flavoprotein] + H(+) = (2E)-octenoyl-CoA + reduced [electron-transfer flavoprotein]. The enzyme catalyses decanoyl-CoA + oxidized [electron-transfer flavoprotein] + H(+) = (2E)-decenoyl-CoA + reduced [electron-transfer flavoprotein]. The catalysed reaction is dodecanoyl-CoA + oxidized [electron-transfer flavoprotein] + H(+) = (2E)-dodecenoyl-CoA + reduced [electron-transfer flavoprotein]. It catalyses the reaction tetradecanoyl-CoA + oxidized [electron-transfer flavoprotein] + H(+) = (2E)-tetradecenoyl-CoA + reduced [electron-transfer flavoprotein]. It carries out the reaction oxidized [electron-transfer flavoprotein] + hexadecanoyl-CoA + H(+) = (2E)-hexadecenoyl-CoA + reduced [electron-transfer flavoprotein]. The protein operates within lipid metabolism; mitochondrial fatty acid beta-oxidation. Medium-chain specific acyl-CoA dehydrogenase is one of the acyl-CoA dehydrogenases that catalyze the first step of mitochondrial fatty acid beta-oxidation, an aerobic process breaking down fatty acids into acetyl-CoA and allowing the production of energy from fats. The first step of fatty acid beta-oxidation consists in the removal of one hydrogen from C-2 and C-3 of the straight-chain fatty acyl-CoA thioester, resulting in the formation of trans-2-enoyl-CoA. Electron transfer flavoprotein (ETF) is the electron acceptor that transfers electrons to the main mitochondrial respiratory chain via ETF-ubiquinone oxidoreductase (ETF dehydrogenase). Among the different mitochondrial acyl-CoA dehydrogenases, medium-chain specific acyl-CoA dehydrogenase acts specifically on acyl-CoAs with saturated 6 to 12 carbons long primary chains. The protein is Medium-chain specific acyl-CoA dehydrogenase, mitochondrial of Bos taurus (Bovine).